A 366-amino-acid chain; its full sequence is MTVRNIASICNMGTNASALEKDIGPEQFPINEHYFGLVNFGNTCYCNSVLQALYFCRPFRENVLAYKAQQKKKENLLTCLADLFHSIATQKKKVGVIPPKKFISRLRKENDLFDNYMQQDAHEFLNYLLNTIADILQEEKKQEKQNGKLKNGNMNEPAENSKPELTWVHEIFQGTLTNETRCLNCETVSSKDEDFLDLSVDVEQNTSITHCLRDFSNTETLCSEQKYYCETCCSKQEAQKRMRVKKLPMILALHLKRFKYMEQLHRYTKLSYRVVFPLELRLFNTSSDAVNLDRMYDLVAVVVHCGSGPNRGHYITIVKSHGFWLLFDDDIVEKIDAQAIEEFYGLTSDISKNSESGYILFYQSRE.

The USP domain occupies 35-365 (FGLVNFGNTC…SGYILFYQSR (331 aa)). The active-site Nucleophile is the Cys-44. Zn(2+)-binding residues include Cys-182, Cys-185, Cys-229, and Cys-232. His-313 (proton acceptor) is an active-site residue.

The protein belongs to the peptidase C19 family. USP12/USP46 subfamily. As to quaternary structure, interacts with WDR48. Interacts with WDR20. Interacts with DMWD. Component of the USP46/WDR20/WDR48 deubiquitinating complex. In terms of tissue distribution, detected in lung and spleen, and at lower levels in brain, kidney, testis and liver.

The protein localises to the cytoplasm. It catalyses the reaction Thiol-dependent hydrolysis of ester, thioester, amide, peptide and isopeptide bonds formed by the C-terminal Gly of ubiquitin (a 76-residue protein attached to proteins as an intracellular targeting signal).. Its function is as follows. Deubiquitinating enzyme that plays a role in behavior, possibly by regulating GABA action. May act by mediating the deubiquitination of GAD1/GAD67. Has almost no deubiquitinating activity by itself and requires the interaction with WDR48 to have a high activity. Not involved in deubiquitination of monoubiquitinated FANCD2. This chain is Ubiquitin carboxyl-terminal hydrolase 46, found in Rattus norvegicus (Rat).